Reading from the N-terminus, the 647-residue chain is Serine/threonine-protein kinase PLK3 (647 aa).

The segment at 1–56 is disordered; sequence MEPAAGFLSPRPFPRAAAPSSPPAGPGPPASASPRSEPGVLAGPQTPDASRLITDP. Residues 20-31 are compositionally biased toward pro residues; sequence SSPPAGPGPPAS. One can recognise a Protein kinase domain in the interval 62 to 314; it reads YIKGRLLGKG…IEQILRHDFF (253 aa). Residues 68–76 and K91 each bind ATP; that span reads LGKGGFARC. D185 functions as the Proton acceptor in the catalytic mechanism. 2 consecutive POLO box domains span residues 464 to 542 and 563 to 646; these read WVSK…YMEQ and LLLQ…DRSP.

It belongs to the protein kinase superfamily. Ser/Thr protein kinase family. CDC5/Polo subfamily. Interacts with GOLGB1. Interacts (via the POLO-box domain) with CIB1; leading to inhibit PLK3 kinase activity. In terms of processing, phosphorylated in an ATM-dependent manner following DNA damage. Phosphorylated as cells enter mitosis and dephosphorylated as cells exit mitosis. In terms of tissue distribution, constitutively expressed in post-mitotic neurons.

The protein resides in the cell projection. The protein localises to the dendrite. It is found in the cytoplasm. Its subcellular location is the nucleus. It localises to the nucleolus. The protein resides in the golgi apparatus. The protein localises to the cytoskeleton. It is found in the microtubule organizing center. Its subcellular location is the centrosome. The enzyme catalyses L-seryl-[protein] + ATP = O-phospho-L-seryl-[protein] + ADP + H(+). It catalyses the reaction L-threonyl-[protein] + ATP = O-phospho-L-threonyl-[protein] + ADP + H(+). Serine/threonine-protein kinase involved in cell cycle regulation, response to stress and Golgi disassembly. Polo-like kinases act by binding and phosphorylating proteins that are already phosphorylated on a specific motif recognized by the POLO box domains. Phosphorylates ATF2, BCL2L1, CDC25A, CDC25C, CHEK2, HIF1A, JUN, p53/TP53, p73/TP73, PTEN, TOP2A and VRK1. Involved in cell cycle regulation: required for entry into S phase and cytokinesis. Phosphorylates BCL2L1, leading to regulate the G2 checkpoint and progression to cytokinesis during mitosis. Plays a key role in response to stress: rapidly activated upon stress stimulation, such as ionizing radiation, reactive oxygen species (ROS), hyperosmotic stress, UV irradiation and hypoxia. Involved in DNA damage response and G1/S transition checkpoint by phosphorylating CDC25A, p53/TP53 and p73/TP73. Phosphorylates p53/TP53 in response to reactive oxygen species (ROS), thereby promoting p53/TP53-mediated apoptosis. Phosphorylates CHEK2 in response to DNA damage, promoting the G2/M transition checkpoint. Phosphorylates the transcription factor p73/TP73 in response to DNA damage, leading to inhibit p73/TP73-mediated transcriptional activation and pro-apoptotic functions. Phosphorylates HIF1A and JUN is response to hypoxia. Phosphorylates ATF2 following hyperosmotic stress in corneal epithelium. Also involved in Golgi disassembly during the cell cycle: part of a MEK1/MAP2K1-dependent pathway that induces Golgi fragmentation during mitosis by mediating phosphorylation of VRK1. May participate in endomitotic cell cycle, a form of mitosis in which both karyokinesis and cytokinesis are interrupted and is a hallmark of megakaryocyte differentiation, via its interaction with CIB1. The sequence is that of Serine/threonine-protein kinase PLK3 (Plk3) from Rattus norvegicus (Rat).